The following is a 1058-amino-acid chain: Zinc finger protein 865 (1058 aa).

Disordered regions lie at residues Met1–Val24, Leu58–Phe134, and Gly156–Pro201. The span at Ser8–Glu21 shows a compositional bias: gly residues. Pro residues predominate over residues Thr61–Asp78. Residues Ser93–Ser113 are compositionally biased toward low complexity. A compositionally biased stretch (pro residues) spans Pro120–Leu133. Residues Gly172–Ser187 are compositionally biased toward low complexity. C2H2-type zinc fingers lie at residues Phe220–His242 and Tyr248–His270. Positions Cys269–Ala342 are disordered. Over residues Pro294 to Thr324 the composition is skewed to low complexity. 9 consecutive C2H2-type zinc fingers follow at residues Phe350–His372, Phe378–His400, Leu407–His429, Tyr439–His461, Phe546–His568, His574–His596, Tyr602–His624, Tyr664–His686, and Tyr692–His714. Residues Ala459–Pro486 form a disordered region. Residues Leu721 to Ala743 are disordered. C2H2-type zinc fingers lie at residues Phe791–His813, Leu819–His841, Phe847–His869, Tyr875–His897, Phe903–His925, Gln931–His953, Tyr959–His981, Leu988–His1010, and Phe1016–His1038. Lys801 participates in a covalent cross-link: Glycyl lysine isopeptide (Lys-Gly) (interchain with G-Cter in SUMO2). A Glycyl lysine isopeptide (Lys-Gly) (interchain with G-Cter in SUMO2) cross-link involves residue Lys1039.

This sequence belongs to the krueppel C2H2-type zinc-finger protein family.

Its subcellular location is the nucleus. Its function is as follows. May be involved in transcriptional regulation. The protein is Zinc finger protein 865 (Znf865) of Mus musculus (Mouse).